The following is an 836-amino-acid chain: TATA box-binding protein-associated factor RNA polymerase I subunit C (836 aa).

2 disordered regions span residues 662–683 and 703–836; these read GDLS…QQDE and HRGE…RMGF. Over residues 738-754 the composition is skewed to polar residues; that stretch reads DASSAPRSQDLSTSEAR. Over residues 780 to 796 the composition is skewed to basic and acidic residues; it reads RQTLRDHTDKLPLKRDT. At T802 the chain carries Phosphothreonine. Residues 803–828 are compositionally biased toward polar residues; sequence PPSQASSLQTMSFRQQTPVHSGSQPP.

In terms of assembly, component of the transcription factor SL1/TIF-IB complex, composed of TBP and at least TAF1A, TAF1B, TAF1C and TAF1D. In the complex interacts directly with TBP, TAF1A and TAF1B. Interaction of the SL1/TIF-IB subunits with TBP excludes interaction of TBP with the transcription factor IID (TFIID) subunits. Interacts with MYC and RRN3. Interacts with p53/TP53; the interaction prevents the association of SL1/TIF-IB with UBTF and represses RNA polymerase I transcription. Part of Pol I pre-initiation complex (PIC), in which Pol I core assembles with RRN3 and promoter-bound UTBF and SL1/TIF-IB complex.

The protein localises to the nucleus. It localises to the nucleolus. Functionally, component of the transcription factor SL1/TIF-IB complex, which is involved in the assembly of the PIC (pre-initiation complex) during RNA polymerase I-dependent transcription. The rate of PIC formation probably is primarily dependent on the rate of association of SL1/TIF-IB with the rDNA promoter. SL1/TIF-IB is involved in stabilization of nucleolar transcription factor 1/UBTF on rDNA. Formation of SL1/TIF-IB excludes the association of TBP with TFIID subunits. Recruits RNA polymerase I to the rRNA gene promoter via interaction with RRN3. This is TATA box-binding protein-associated factor RNA polymerase I subunit C (Taf1c) from Mus musculus (Mouse).